We begin with the raw amino-acid sequence, 218 residues long: MSQVIRTLALTGLALAGLSGCVSVPRGQGGAAPAVVGQVSESARQAEAARQAWLQAHPAWSFQGRVAISKGRDGGSGRLDWQQDGPRYHVQLSAPVTRQSWVLTGDTTTGAGRLEGLDGGPRAGADAEQVLLEATGWTIPVNQMPDWVRALRIADAGAARVDLDEHGRPRTVQQDGWTIDFLEWTPASAAQPELPRRIEARNGDAKVRLLVDQWTLSP.

The N-terminal stretch at Met1–Gly20 is a signal peptide. A lipid anchor (N-palmitoyl cysteine) is attached at Cys21. The S-diacylglycerol cysteine moiety is linked to residue Cys21.

Belongs to the LolB family. In terms of assembly, monomer.

It localises to the cell outer membrane. In terms of biological role, plays a critical role in the incorporation of lipoproteins in the outer membrane after they are released by the LolA protein. This is Outer-membrane lipoprotein LolB from Xanthomonas campestris pv. campestris (strain B100).